A 253-amino-acid polypeptide reads, in one-letter code: Probable transcriptional regulatory protein TM_0466 (253 aa).

It belongs to the TACO1 family.

It is found in the cytoplasm. This is Probable transcriptional regulatory protein TM_0466 from Thermotoga maritima (strain ATCC 43589 / DSM 3109 / JCM 10099 / NBRC 100826 / MSB8).